The following is a 216-amino-acid chain: Probable succinyl-CoA:3-ketoacid coenzyme A transferase subunit B (216 aa).

E47 is an active-site residue.

This sequence belongs to the 3-oxoacid CoA-transferase subunit B family. In terms of assembly, heterodimer of a subunit A and a subunit B.

It carries out the reaction a 3-oxo acid + succinyl-CoA = a 3-oxoacyl-CoA + succinate. This is Probable succinyl-CoA:3-ketoacid coenzyme A transferase subunit B (scoB) from Bacillus subtilis (strain 168).